The chain runs to 277 residues: 5-formyltetrahydrofolate cyclo-ligase, mitochondrial (277 aa).

A mitochondrion-targeting transit peptide spans 1 to 48 (MIGARVFCITTTALRRSPIFFFPKIPTRPVFRLSPATRPIVAMSTTSK). Position 60–64 (60–64 (KRVVR)) interacts with ATP. Substrate contacts are provided by residues E113 and 207–211 (RGGGY). ATP-binding positions include 206–213 (GRGGGYYD) and D254.

The protein belongs to the 5-formyltetrahydrofolate cyclo-ligase family. As to quaternary structure, monomer.

It is found in the mitochondrion. The catalysed reaction is (6S)-5-formyl-5,6,7,8-tetrahydrofolate + ATP = (6R)-5,10-methenyltetrahydrofolate + ADP + phosphate. Its function is as follows. Contributes to tetrahydrofolate metabolism and photorespiration through the regulation of serine hydroxymethyltransferase. Prefers the pentalutamyl to the monoglutamyl form of 5-formyltetrahydrofolate. The protein is 5-formyltetrahydrofolate cyclo-ligase, mitochondrial (5FCL) of Arabidopsis thaliana (Mouse-ear cress).